The following is a 38-amino-acid chain: Large ribosomal subunit protein bL36 (38 aa).

This sequence belongs to the bacterial ribosomal protein bL36 family.

The sequence is that of Large ribosomal subunit protein bL36 from Lactobacillus johnsonii (strain CNCM I-12250 / La1 / NCC 533).